The chain runs to 396 residues: Acetate kinase (396 aa).

Residue Asn8 participates in Mg(2+) binding. Lys15 contributes to the ATP binding site. Arg89 serves as a coordination point for substrate. Asp146 functions as the Proton donor/acceptor in the catalytic mechanism. ATP contacts are provided by residues 206-210 (HIGNG), 283-285 (DMR), and 331-335 (GVGEN). Residue Glu383 coordinates Mg(2+).

The protein belongs to the acetokinase family. Homodimer. Requires Mg(2+) as cofactor. Mn(2+) is required as a cofactor.

The protein localises to the cytoplasm. The enzyme catalyses acetate + ATP = acetyl phosphate + ADP. It functions in the pathway metabolic intermediate biosynthesis; acetyl-CoA biosynthesis; acetyl-CoA from acetate: step 1/2. Its function is as follows. Catalyzes the formation of acetyl phosphate from acetate and ATP. Can also catalyze the reverse reaction. The sequence is that of Acetate kinase from Streptococcus pneumoniae (strain Hungary19A-6).